The following is a 123-amino-acid chain: UPF0299 membrane protein VV1471 (123 aa).

Transmembrane regions (helical) follow at residues 8–28, 35–55, 71–91, and 94–114; these read LFGLVVSFGLIFLALTIGSGI, SVPGSVIGMLVLFVSMAIGLV, MILLFVPISVGLMEHFDMLIA, and LPIIASAIGGSLIVLVSLGWL.

The protein belongs to the UPF0299 family.

The protein localises to the cell inner membrane. The chain is UPF0299 membrane protein VV1471 from Vibrio vulnificus (strain YJ016).